Consider the following 215-residue polypeptide: Small ribosomal subunit protein bS6 (215 aa).

Disordered stretches follow at residues 121 to 153 (RENN…QKPK) and 187 to 215 (NQRQ…KDKQ). Residues 144–153 (SRTEKAQKPK) are compositionally biased toward basic and acidic residues. Low complexity predominate over residues 188–198 (QRQNQQNNNNN). A compositionally biased stretch (basic and acidic residues) spans 199-215 (RFDRNRNRQHNRFKDKQ).

The protein belongs to the bacterial ribosomal protein bS6 family.

Binds together with bS18 to 16S ribosomal RNA. The sequence is that of Small ribosomal subunit protein bS6 (rpsF) from Mycoplasma pneumoniae (strain ATCC 29342 / M129 / Subtype 1) (Mycoplasmoides pneumoniae).